Consider the following 596-residue polypeptide: Probable protein S-acyltransferase 22 (596 aa).

2 helical membrane passes run 15 to 35 (VVAV…FAPF) and 44 to 64 (IAMG…IWCA). The interval 102-125 (TGGAKSHDGTCVEDTENGSNKKLE) is disordered. In terms of domain architecture, DHHC spans 163-213 (FYCSLCEVEVFKYSKHCRVCDKCVDRFDHHCRWLNNCIGKRNYRKFFSLMV). Catalysis depends on Cys-193, which acts as the S-palmitoyl cysteine intermediate. The next 2 helical transmembrane spans lie at 215–235 (AIFL…LCLL) and 254–274 (LIPF…ATLP). 3 disordered regions span residues 433–455 (SGRR…RRQS), 498–523 (QTSR…DSHD), and 549–596 (MGQQ…HKSR). Polar residues predominate over residues 498–518 (QTSRAMSGSGNVMVTSSPESS). The segment covering 549–571 (MGQQRGQQQQQQLSMMMMPLSRS) has biased composition (low complexity).

It belongs to the DHHC palmitoyltransferase family.

Its subcellular location is the cell membrane. The protein localises to the cytoplasmic vesicle membrane. The catalysed reaction is L-cysteinyl-[protein] + hexadecanoyl-CoA = S-hexadecanoyl-L-cysteinyl-[protein] + CoA. In terms of biological role, palmitoyl acyltransferase. In Arabidopsis thaliana (Mouse-ear cress), this protein is Probable protein S-acyltransferase 22 (PAT22).